We begin with the raw amino-acid sequence, 308 residues long: Growth/differentiation factor 15 (308 aa).

The first 29 residues, 1–29 (MPGQELRTVNGSQMLLVLLVLSWLPHGGA), serve as a signal peptide directing secretion. The propeptide occupies 30-194 (LSLAEASRAS…RPQAARGRRR (165 aa)). An N-linked (GlcNAc...) asparagine glycan is attached at N70. The interval 152–177 (APALHLRLSPPPSQSDQLLAESSSAR) is disordered. Residues 165-177 (QSDQLLAESSSAR) are compositionally biased toward polar residues. 4 cysteine pairs are disulfide-bonded: C203-C210, C211-C274, C240-C305, and C244-C307.

The protein belongs to the TGF-beta family. In terms of assembly, homodimer; disulfide-linked. Interacts with GFRAL and RET; ligand of GFRAL, which mediates GDF15 internalization and cellular signaling through interaction with RET via the formation of a 2:2:2 ternary complex composed of GDF15, GFRAL and RET. As to expression, detected in plasma (at protein level). Highly expressed in placenta, with lower levels in prostate and colon and some expression in kidney.

The protein resides in the secreted. Functionally, hormone produced in response to various stresses to confer information about those stresses to the brain, and trigger an aversive response, characterized by nausea, vomiting, and/or loss of appetite. The aversive response is both required to reduce continuing exposure to those stresses at the time of exposure and to promote avoidance behavior in the future. Acts by binding to its receptor, GFRAL, activating GFRAL-expressing neurons localized in the area postrema and nucleus tractus solitarius of the brainstem. It then triggers the activation of neurons localized within the parabrachial nucleus and central amygdala, which constitutes part of the 'emergency circuit' that shapes responses to stressful conditions. The GDF15-GFRAL signal induces expression of genes involved in metabolism, such as lipid metabolism in adipose tissues. Required for avoidance behavior in response to food allergens: induced downstream of mast cell activation to promote aversion and minimize harmful effects of exposure to noxious substances. In addition to suppress appetite, also promotes weight loss by enhancing energy expenditure in muscle: acts by increasing calcium futile cycling in muscle. Contributes to the effect of metformin, an anti-diabetic drug, on appetite reduction and weight loss: produced in the kidney in response to metformin treatment, thereby activating the GDF15-GFRAL response, leading to reduced appetite and weight. The contribution of GDF15 to weight loss following metformin treatment is however limited and subject to discussion. Produced in response to anticancer drugs, such as camptothecin or cisplatin, promoting nausea, vomiting and contributing to malnutrition. Overproduced in many cancers, promoting anorexia in cancer (cachexia). Responsible for the risk of nausea and vomiting during pregnancy: high levels of GDF15 during pregnancy, mostly originating from the fetus, are associated with increased nausea and vomiting. Maternal sensitivity to nausea is probably determined by pre-pregnancy exposure to GDF15, women with naturally high level of GDF15 being less susceptible to nausea than women with low levels of GDF15 before pregnancy. Promotes metabolic adaptation in response to systemic inflammation caused by bacterial and viral infections in order to promote tissue tolerance and prevent tissue damage. Required for tissue tolerance in response to myocardial infarction by acting as an inhibitor of leukocyte integring activation, thereby protecting against cardiac rupture. Inhibits growth hormone signaling on hepatocytes. The polypeptide is Growth/differentiation factor 15 (Homo sapiens (Human)).